A 932-amino-acid chain; its full sequence is MIRSSIKNKITTTKSLSCISLINRQYGTSTKEVRETFLNYFEKNGHKRLPSGSLLPYNDNSLLFTNAGMVQFKNQFTGNEESKYKKVTTSQKCVRAGGKHNDLDNVGYTARHHTFFEMLGNFSFGGYNHFKRDSIQHAWDLLTKEYGLPKERLAISVLEGDEESAEIWRNQIGLPNDKIMYKGREDNFWSMGDGPGPCGPCSEIFWDHGKEVDGERYLEIWNLVFMQYNKSGKEGDEMPVDKLPIPCVDTGMGLERMASVLQGKFTNYDIDLFQNLINSFKEIVTMDVGRAQFQLQQDPQRVETAYRVIADHLRSISFLISDGVIPFNIGRGYVLRKIIRRALSYGKILGFNGPFLSTLFPLLEREMGDIYPQLIERSNEIRNVILNEEGTFYNAIQRGIPYLEEFVQQNKLNEESLFLLYNTYGLPLEMSQVKAKQNNIEIDMDKVNKLIDETREQSRLTWNTSSSSSDQTTQQTTQLPEKTFLSWKSDNIKPKFIGYNGCVENDNSKVLRSHFDNDSHLVYLSLDETPFYGTSGGQVGDVGELINVSSGKNVYRVINTIKPYEGGLVLVVEWDPSQQLASQVYQDLKQDSLLNCRVDRSIRNQVAVHHSATHLLHAALRNVIGKSVVQAGSLVGSESLRFDFTHGQKLTPNQIEQIEQWVNDAIAKDIALNTDEIPYEQASKNSDTLQLFSEKYSELVRVVSIPGFSKELCGGTHVERSSSIHQFKIISESSVAAGTRRIEAVAGLAATNFFKNHYQLVHQLSNSINSPIVNFQQSFERLVNTNSKQEKEIFDLKLKIAQLSSVNYNGQYKSDNGGEMIPLSLHIIDCEDKKAFTKVTENFAKEFSSSPIQLTISKGGKVLCQLLSSSSSSSSSLSADTVLKQLFKSIGMGKGGGNKLMANASIQPLNNEILNSILNWSNVNNNYNNKKN.

The disordered stretch occupies residues 458–480 (SRLTWNTSSSSSDQTTQQTTQLP). Over residues 464 to 478 (TSSSSSDQTTQQTTQ) the composition is skewed to low complexity. His610, His614, Cys713, and His717 together coordinate Zn(2+).

Belongs to the class-II aminoacyl-tRNA synthetase family. Monomer. It depends on Zn(2+) as a cofactor.

Its subcellular location is the mitochondrion. It carries out the reaction tRNA(Ala) + L-alanine + ATP = L-alanyl-tRNA(Ala) + AMP + diphosphate. Functionally, catalyzes the attachment of alanine to tRNA(Ala) in a two-step reaction: alanine is first activated by ATP to form Ala-AMP and then transferred to the acceptor end of tRNA(Ala). Also edits incorrectly charged tRNA(Ala) via its editing domain. The polypeptide is Alanine--tRNA ligase, mitochondrial (malaS) (Dictyostelium discoideum (Social amoeba)).